The primary structure comprises 61 residues: uncharacterized protein (61 aa).

Residues 10–61 (YEEENDNEDFEEEVELSREDLNQIINELAPFLIKLLTDLTELTQKKEESENE) are a coiled coil.

This is an uncharacterized protein from Acidianus bottle-shaped virus (isolate Italy/Pozzuoli) (ABV).